Here is a 2327-residue protein sequence, read N- to C-terminus: Kielin/chordin-like protein (2327 aa).

Positions 1–19 (MNTLLWTILLPLLFSFCVC) are cleaved as a signal peptide. A disordered region spans residues 250–294 (LPLPYSLSGERQMEDEEIQREPRAPDLSDTDHYQQQQSEVPAQLL). A compositionally biased stretch (basic and acidic residues) spans 268–281 (QREPRAPDLSDTDH). The stretch at 291 to 332 (AQLLAKDDRLQRLEEAVKGLTNMIDMIKSQNADLQARVIALE) forms a coiled coil. VWFC domains are found at residues 339–400 (STCV…SVGP), 401–438 (CMSCICQSGEVSCTPKLCPPVTCSDPVTLPNECCPLCA), 439–493 (TGCS…AKCQ), 494–553 (QGCE…PSCP), 554–610 (VCEL…LDCS), 611–669 (ACEM…SQCQ), 670–728 (SCMD…PMCD), 729–786 (GCLY…PRCE), 787–847 (GCEY…PSCD), 848–907 (VCDF…PVCK), 908–966 (VCVQ…PVCD), 967–1025 (SCSY…AKCP), 1026–1083 (DCRY…NNCN), 1084–1142 (GCNY…PQCP), 1146–1203 (ADCP…RSCD), 1204–1260 (GCLM…KECQ), 1261–1319 (DCQY…PVCD), 1321–1377 (CSYN…CPIC), 1378–1439 (QGCH…DGCN), 1440–1495 (YSGR…PRCT), 1496–1555 (GICK…PVCD), 1556–1614 (RCFY…RECP), 1615–1673 (VCRY…PRCR), 1674–1731 (GCVY…PVCA), 1732–1799 (DCIS…SSCA), 1800–1860 (QALS…PVCN), 1861–1924 (ECVV…HECQ), and 1928–1988 (VSCW…PHCI). The VWFD domain occupies 1992 to 2168 (ATCIAFGDPH…SSNDSSSSCW (177 aa)). 2 cysteine pairs are disulfide-bonded: C1994/C2126 and C2016/C2167. Residues 2259–2319 (CPHDRGYVFD…ESHCIPPESC (61 aa)) form the TIL domain.

The protein resides in the secreted. May be a signaling molecule that mediates inductive activities of the embryonic midline. Able to dorsalize mesoderm. The polypeptide is Kielin/chordin-like protein (kcp) (Xenopus laevis (African clawed frog)).